The following is a 106-amino-acid chain: MVRILRWFIRLYQIAISPLLGPRCRYIPTCSQYALEALQTHGAIKGVWLSSKRICRCHPWGGSGYDPVPPKAIRFISFHQIDSQTHHVAVPFRDRLMKQNLSNHLG.

Belongs to the UPF0161 family.

The protein localises to the cell inner membrane. Could be involved in insertion of integral membrane proteins into the membrane. This Acinetobacter baumannii (strain AB307-0294) protein is Putative membrane protein insertion efficiency factor.